The sequence spans 510 residues: UDP-N-acetylmuramate--L-alanine ligase (510 aa).

Positions Met-1–Asn-25 are disordered. Gly-140–Thr-146 is an ATP binding site.

It belongs to the MurCDEF family.

Its subcellular location is the cytoplasm. The catalysed reaction is UDP-N-acetyl-alpha-D-muramate + L-alanine + ATP = UDP-N-acetyl-alpha-D-muramoyl-L-alanine + ADP + phosphate + H(+). It functions in the pathway cell wall biogenesis; peptidoglycan biosynthesis. Cell wall formation. This chain is UDP-N-acetylmuramate--L-alanine ligase, found in Synechococcus sp. (strain JA-3-3Ab) (Cyanobacteria bacterium Yellowstone A-Prime).